Consider the following 518-residue polypeptide: Calcium/calmodulin-dependent protein kinase kinase cmkC (518 aa).

Positions 1–72 (MANEGAGSLQ…SEYTLSQDDG (72 aa)) are disordered. Composition is skewed to polar residues over residues 8-17 (SLQQDASPGS) and 60-71 (NARSEYTLSQDD). Positions 81-376 (YVIKQEIGRG…MDELREHPWV (296 aa)) constitute a Protein kinase domain. ATP-binding positions include 87–95 (IGRGSFGAV) and Lys109. The tract at residues 119-149 (RAKSQLLRQSRGPKRSSRWPKLPFSSPGTGT) is disordered. Catalysis depends on Asp243, which acts as the Proton acceptor. The tract at residues 404-409 (FSAITK) is autoinhibitory domain. Residues 407–431 (ITKNFGHVLAVMKAAKKFKSLQGPT) form a calmodulin-binding region. The disordered stretch occupies residues 453 to 472 (PTQMDPEESVSLPSPLPYKK).

This sequence belongs to the protein kinase superfamily. Ser/Thr protein kinase family.

It catalyses the reaction L-seryl-[protein] + ATP = O-phospho-L-seryl-[protein] + ADP + H(+). The enzyme catalyses L-threonyl-[protein] + ATP = O-phospho-L-threonyl-[protein] + ADP + H(+). With respect to regulation, activated by Ca(2+)/calmodulin. Binding of calmodulin may relieve intrasteric autoinhibition. Its function is as follows. Calcium/calmodulin-dependent protein kinase that operates in the calcium-triggered CaMKK-CaMK1 signaling cascade. Phosphorylates and activates cmkB in vitro. Required in G1-phase of the cell cycle for proper timing of the initial nuclear division after germination as well as for subsequent nuclear division cycles. Required for the normal temporal regulation of nimX activity. The chain is Calcium/calmodulin-dependent protein kinase kinase cmkC from Emericella nidulans (Aspergillus nidulans).